A 102-amino-acid polypeptide reads, in one-letter code: Small ribosomal subunit protein uS10 (102 aa).

It belongs to the universal ribosomal protein uS10 family. In terms of assembly, part of the 30S ribosomal subunit.

In terms of biological role, involved in the binding of tRNA to the ribosomes. This Methanosarcina mazei (strain ATCC BAA-159 / DSM 3647 / Goe1 / Go1 / JCM 11833 / OCM 88) (Methanosarcina frisia) protein is Small ribosomal subunit protein uS10.